A 339-amino-acid polypeptide reads, in one-letter code: Annexin A2 (339 aa).

At Ser-2 the chain carries N-acetylserine. Residues 2-24 (STVHEILCKLSLEGDHSTPPSAY) form an S100A10-binding site region. Tyr-24 bears the Phosphotyrosine; by SRC mark. The residue at position 26 (Ser-26) is a Phosphoserine; by PKC. 2 Annexin repeats span residues 33–104 (FDAE…GLLK) and 105–176 (TPAQ…ALAK). Lys-49 carries the post-translational modification N6-acetyllysine; alternate. Lys-49 participates in a covalent cross-link: Glycyl lysine isopeptide (Lys-Gly) (interchain with G-Cter in SUMO1); alternate. Residue Lys-49 forms a Glycyl lysine isopeptide (Lys-Gly) (interchain with G-Cter in SUMO2); alternate linkage. Lys-152 carries the N6-acetyllysine modification. Ser-184 carries the phosphoserine modification. 2 Annexin repeats span residues 189–261 (ELID…NLVQ) and 265–336 (NKPL…YLCG). Tyr-199 is modified (phosphotyrosine). Lys-227 bears the N6-acetyllysine mark.

This sequence belongs to the annexin family. As to quaternary structure, heterotetramer containing 2 light chains of S100A10/p11 and 2 heavy chains of ANXA2/p36. Interacts with ATP1B1. Interacts with DYSF. Interacts with COCH. Interacts (via repeat Annexin 1) with PCSK9 (via the C-terminal domain); the interaction inhibits the degradation of LDLR. Interacts with CEACAM1 (via the cytoplasmic domain); this interaction is regulated by phosphorylation of CEACAM1. Interacts with APPL2 and APPL1; targets APPL2 to endosomes and acting in parallel to RAB5A. Interacts with S100A4. May interact with UBAP2. Interacts with PLEKHG4B; this interaction is required for PLEKHG4B localization to cell-cell adhesions. Interacts with FAM13A. Interacts with salivary cystatin-L2 (via loop 2) from the tick Ixodes scapularis; the interaction results in reduced activation of mouse NLRC4 inflammasome formation upon Anaplasma phagocytophilum infection. In terms of processing, ISGylated.

The protein localises to the secreted. It localises to the extracellular space. Its subcellular location is the extracellular matrix. It is found in the basement membrane. The protein resides in the melanosome. The protein localises to the early endosome. Functionally, calcium-regulated membrane-binding protein whose affinity for calcium is greatly enhanced by anionic phospholipids. It binds two calcium ions with high affinity. May be involved in heat-stress response. Inhibits PCSK9-enhanced LDLR degradation, probably reduces PCSK9 protein levels via a translational mechanism but also competes with LDLR for binding with PCSK9. Binds to endosomes damaged by phagocytosis of particulate wear debris and participates in endosomal membrane stabilization, thereby limiting NLRP3 inflammasome activation. Required for endothelial cell surface plasmin generation and may support fibrinolytic surveillance and neoangiogenesis. In terms of biological role, (Microbial infection) Regulates the formation of the NLRC4 inflammasome triggered by Anaplasma phagocytophilum infection. (Microbial infection) Protects against Klebsiella pneumoniae infection. Attenuates bacteria-induced pulmonary inflammation and promotes intro-abdominal pathogen clearance. Promotes anti-inflammatory responses by facilitating TLR4 internalization and translocation into early endosomal membranes; this leads to activation of TRAM-dependent endosomal signaling and release of anti-inflammatory cytokines. Its function is as follows. (Microbial infection) Promotes macrophage phagocytic efficiency towards Cryptococcus neoformans and ability to control fungal infection inside the cells. Functionally, (Microbial infection) Contributes to protection against Pseudomonas aeruginosa infection by regulating autophagy via the AKT1-mTOR-ULK1/2 signaling pathway and activation of Rho GTPases via FAM13A-mediated mechanism. The chain is Annexin A2 (Anxa2) from Mus musculus (Mouse).